Consider the following 652-residue polypeptide: Carboxypeptidase S1 homolog A (652 aa).

An N-terminal signal peptide occupies residues 1–19 (MRLAASIAVALPVIGAASA). A disulfide bond links cysteine 50 and cysteine 121. 6 N-linked (GlcNAc...) asparagine glycosylation sites follow: asparagine 77, asparagine 132, asparagine 161, asparagine 168, asparagine 184, and asparagine 202. Serine 238 is a catalytic residue. N-linked (GlcNAc...) asparagine glycosylation is found at asparagine 260, asparagine 299, asparagine 347, and asparagine 410. 2 disulfide bridges follow: cysteine 325–cysteine 361 and cysteine 332–cysteine 354. Aspartate 458 is a catalytic residue. Residue cysteine 461 participates in substrate binding. Residues asparagine 474, asparagine 492, and asparagine 505 are each glycosylated (N-linked (GlcNAc...) asparagine). The active site involves histidine 516. Glutamate 517 serves as a coordination point for substrate. Asparagine 594 carries N-linked (GlcNAc...) asparagine glycosylation. The interval 608 to 628 (AASKGNPPPTTTSSPTASPTA) is disordered. Low complexity predominate over residues 618–628 (TTSSPTASPTA). Residue glycine 629 is the site of GPI-anchor amidated glycine attachment. A propeptide spans 630–652 (SAMLKAPVAMLAISALTVLAFYL) (removed in mature form).

The protein belongs to the peptidase S10 family.

It localises to the cell membrane. The catalysed reaction is Preferential release of a C-terminal arginine or lysine residue.. Its function is as follows. Extracellular serine carboxypeptidase that contributes to pathogenicity. The protein is Carboxypeptidase S1 homolog A (SCPA) of Arthroderma benhamiae (strain ATCC MYA-4681 / CBS 112371) (Trichophyton mentagrophytes).